A 699-amino-acid polypeptide reads, in one-letter code: Cyclic AMP-dependent transcription factor ATF-6 beta (699 aa).

A2 is subject to N-acetylalanine. Residues 2-393 lie on the Cytoplasmic side of the membrane; sequence AELMLLSEIA…GLKLGSGNRK (392 aa). Disordered stretches follow at residues 59-114, 218-246, and 290-313; these read SLDV…QVPG, VQIS…PKPV, and EGPA…PGNS. A compositionally biased stretch (pro residues) spans 68–78; that stretch reads PPEPPWDPLPI. Residues 86-109 show a composition bias toward low complexity; it reads SEPSSPCSSSSLSSESSHLSTEPP. Residues 322–385 enclose the bZIP domain; the sequence is LLKRQQRMIK…EALLAENSGL (64 aa). A basic motif region spans residues 324 to 344; that stretch reads KRQQRMIKNRESACQSRRKKK. The leucine-zipper stretch occupies residues 347-354; sequence LQGLEARL. The chain crosses the membrane as a helical; Signal-anchor for type II membrane protein span at residues 394-414; it reads VVCIMVFLLFIAFNFGPVSIS. The Lumenal portion of the chain corresponds to 415–699; sequence EPPPAPMSPR…ASQPLYLNHP (285 aa). Residues 417 to 474 are disordered; it reads PPAPMSPRMSREEPRPQRHLLGFSEPGPAHGMEPLREAAQSPGEQQPSSAGRPSFRNL. The span at 458–467 shows a compositional bias: polar residues; sequence PGEQQPSSAG. N-linked (GlcNAc...) asparagine glycans are attached at residues N473 and N502. Residues 519–529 show a composition bias toward basic residues; that stretch reads RHQRGRRKIPH. The tract at residues 519–563 is disordered; it reads RHQRGRRKIPHRAQERQKSQLRKKSPPVKPVPTQPPGPPERDPVG. A compositionally biased stretch (pro residues) spans 545–556; the sequence is PVKPVPTQPPGP. Residues N607, N624, and N673 are each glycosylated (N-linked (GlcNAc...) asparagine). The interval 657–699 is disordered; sequence STVPPSLRKQPSPSPGNTTGGPLPGSAASPAHQASQPLYLNHP. Residues 680 to 693 are compositionally biased toward low complexity; the sequence is PGSAASPAHQASQP.

Belongs to the bZIP family. ATF subfamily. Homodimer and heterodimer with ATF6-alpha. The dimer interacts with the nuclear transcription factor Y (NF-Y) trimer through direct binding to NF-Y subunit C (NF-YC). Post-translationally, N-glycosylated. In terms of processing, during unfolded protein response, a fragment of approximately 60 kDa containing the cytoplasmic transcription factor domain is released by proteolysis. The cleavage is probably performed sequentially by site-1 (MBTPS1, S1P) and site-2 (MBTPS2, S2P) proteases.

It is found in the endoplasmic reticulum membrane. The protein localises to the nucleus. In terms of biological role, precursor of the transcription factor form (Processed cyclic AMP-dependent transcription factor ATF-6 beta), which is embedded in the endoplasmic reticulum membrane. Endoplasmic reticulum stress promotes processing of this form, releasing the transcription factor form that translocates into the nucleus, where it activates transcription of genes involved in the unfolded protein response (UPR). Its function is as follows. Transcription factor that acts in the unfolded protein response (UPR) pathway by activating UPR target genes induced during ER stress. Binds DNA on the 5'-CCAC[GA]-3' half of the ER stress response element (ERSE) (5'-CCAATN(9)CCAC[GA]-3') when NF-Y is bound to ERSE. This chain is Cyclic AMP-dependent transcription factor ATF-6 beta (Atf6b), found in Mus musculus (Mouse).